A 171-amino-acid chain; its full sequence is UPF0260 protein Nham_1404 (171 aa).

Belongs to the UPF0260 family.

The polypeptide is UPF0260 protein Nham_1404 (Nitrobacter hamburgensis (strain DSM 10229 / NCIMB 13809 / X14)).